The primary structure comprises 688 residues: PHD finger protein 21A (688 aa).

A Glycyl lysine isopeptide (Lys-Gly) (interchain with G-Cter in SUMO2) cross-link involves residue lysine 65. 2 disordered regions span residues serine 78 to serine 127 and proline 327 to glutamine 373. Over residues glutamine 85–serine 127 the composition is skewed to low complexity. The segment covering serine 336–glutamate 354 has biased composition (basic and acidic residues). The a.T hook DNA-binding region spans threonine 434–valine 446. The segment at phenylalanine 449–glutamate 471 is disordered. Position 453 is a phosphothreonine (threonine 453). Serine 456 carries the phosphoserine modification. The PHD-type zinc-finger motif lies at glutamate 497–glutamine 544. The stretch at lysine 571–methionine 609 forms a coiled coil. The tract at residues glycine 650–lysine 688 is disordered. Over residues proline 660–alanine 679 the composition is skewed to low complexity.

As to quaternary structure, component of a BHC histone deacetylase complex that contains HDAC1, HDAC2, HMG20B/BRAF35, KDM1A, RCOR1/CoREST and PHF21A/BHC80. The BHC complex may also contain ZMYM2, ZNF217, ZMYM3, GSE1 and GTF2I. In the complex, it interacts directly with HDAC1, HDAC2, HMG20B/BRAF35, KDM1A and RCOR1/CoREST. In terms of tissue distribution, expressed in the brain and testis. Weakly or not expressed in other tissues tested. Localized throughout the central nervous system (CNS) in brain, including the cerebellum, hippocampus, and cortex. Notably present in neuronal cells of granular cell layer and dentate gyrus in cerebellum and hippocampus, respectively. In the seminiferous tubules, the signals it is present strongly in spermatocytes, and weakly in spermatogonia and round spermatids. In some cases, it is also observed solely in spermatocytes (at protein level).

The protein resides in the nucleus. Its function is as follows. Component of the BHC complex, a corepressor complex that represses transcription of neuron-specific genes in non-neuronal cells. The BHC complex is recruited at RE1/NRSE sites by REST and acts by deacetylating and demethylating specific sites on histones, thereby acting as a chromatin modifier. In the BHC complex, it may act as a scaffold. Inhibits KDM1A-mediated demethylation of 'Lys-4' of histone H3 in vitro, suggesting a role in demethylation regulation. The sequence is that of PHD finger protein 21A from Mus musculus (Mouse).